We begin with the raw amino-acid sequence, 270 residues long: Ethanolamine ammonia-lyase small subunit (270 aa).

Residues V161, E182, and C211 each coordinate adenosylcob(III)alamin.

The protein belongs to the EutC family. In terms of assembly, the basic unit is a heterodimer which dimerizes to form tetramers. The heterotetramers trimerize; 6 large subunits form a core ring with 6 small subunits projecting outwards. Requires adenosylcob(III)alamin as cofactor.

The protein localises to the bacterial microcompartment. It carries out the reaction ethanolamine = acetaldehyde + NH4(+). It functions in the pathway amine and polyamine degradation; ethanolamine degradation. Its function is as follows. Catalyzes the deamination of various vicinal amino-alcohols to oxo compounds. Allows this organism to utilize ethanolamine as the sole source of nitrogen and carbon in the presence of external vitamin B12. The sequence is that of Ethanolamine ammonia-lyase small subunit from Azotobacter vinelandii (strain DJ / ATCC BAA-1303).